The primary structure comprises 118 residues: Large ribosomal subunit protein bL20 (118 aa).

It belongs to the bacterial ribosomal protein bL20 family.

In terms of biological role, binds directly to 23S ribosomal RNA and is necessary for the in vitro assembly process of the 50S ribosomal subunit. It is not involved in the protein synthesizing functions of that subunit. The polypeptide is Large ribosomal subunit protein bL20 (Agathobacter rectalis (strain ATCC 33656 / DSM 3377 / JCM 17463 / KCTC 5835 / VPI 0990) (Eubacterium rectale)).